A 355-amino-acid chain; its full sequence is S-adenosylmethionine:tRNA ribosyltransferase-isomerase (355 aa).

This sequence belongs to the QueA family. In terms of assembly, monomer.

It is found in the cytoplasm. The catalysed reaction is 7-aminomethyl-7-carbaguanosine(34) in tRNA + S-adenosyl-L-methionine = epoxyqueuosine(34) in tRNA + adenine + L-methionine + 2 H(+). It functions in the pathway tRNA modification; tRNA-queuosine biosynthesis. Functionally, transfers and isomerizes the ribose moiety from AdoMet to the 7-aminomethyl group of 7-deazaguanine (preQ1-tRNA) to give epoxyqueuosine (oQ-tRNA). The protein is S-adenosylmethionine:tRNA ribosyltransferase-isomerase of Burkholderia lata (strain ATCC 17760 / DSM 23089 / LMG 22485 / NCIMB 9086 / R18194 / 383).